The chain runs to 465 residues: Cysteine--tRNA ligase (465 aa).

C29 contributes to the Zn(2+) binding site. A 'HIGH' region motif is present at residues 31–41 (PTVYNYIHIGN). 3 residues coordinate Zn(2+): C209, H234, and E238. Positions 266-270 (KMSKS) match the 'KMSKS' region motif. K269 provides a ligand contact to ATP. S270 is subject to Phosphoserine.

This sequence belongs to the class-I aminoacyl-tRNA synthetase family. In terms of assembly, monomer. Zn(2+) serves as cofactor.

The protein localises to the cytoplasm. The catalysed reaction is tRNA(Cys) + L-cysteine + ATP = L-cysteinyl-tRNA(Cys) + AMP + diphosphate. The polypeptide is Cysteine--tRNA ligase (Bacillus cereus (strain ATCC 10987 / NRS 248)).